A 393-amino-acid chain; its full sequence is DNA-directed RNA polymerase subunit Rpo1C (393 aa).

It belongs to the RNA polymerase beta' chain family. As to quaternary structure, part of the RNA polymerase complex.

It localises to the cytoplasm. It catalyses the reaction RNA(n) + a ribonucleoside 5'-triphosphate = RNA(n+1) + diphosphate. In terms of biological role, DNA-dependent RNA polymerase (RNAP) catalyzes the transcription of DNA into RNA using the four ribonucleoside triphosphates as substrates. Forms part of the jaw domain. The sequence is that of DNA-directed RNA polymerase subunit Rpo1C from Halococcus morrhuae (Micrococcus morrhuae).